We begin with the raw amino-acid sequence, 200 residues long: Holliday junction branch migration complex subunit RuvA (200 aa).

Residues 1-64 (MLSYLSGTLI…EDALQLYGFI (64 aa)) are domain I. Residues 65–143 (TTEDREVFKL…KLDLKIDIKE (79 aa)) form a domain II region. The interval 144 to 148 (TAFRS) is flexible linker. The tract at residues 149-200 (DKQQVRNDAYSALISLGFTKSIAEKAMRAAIAEVPDGSVDDLIRVALRHVQS) is domain III.

The protein belongs to the RuvA family. In terms of assembly, homotetramer. Forms an RuvA(8)-RuvB(12)-Holliday junction (HJ) complex. HJ DNA is sandwiched between 2 RuvA tetramers; dsDNA enters through RuvA and exits via RuvB. An RuvB hexamer assembles on each DNA strand where it exits the tetramer. Each RuvB hexamer is contacted by two RuvA subunits (via domain III) on 2 adjacent RuvB subunits; this complex drives branch migration. In the full resolvosome a probable DNA-RuvA(4)-RuvB(12)-RuvC(2) complex forms which resolves the HJ.

Its subcellular location is the cytoplasm. Functionally, the RuvA-RuvB-RuvC complex processes Holliday junction (HJ) DNA during genetic recombination and DNA repair, while the RuvA-RuvB complex plays an important role in the rescue of blocked DNA replication forks via replication fork reversal (RFR). RuvA specifically binds to HJ cruciform DNA, conferring on it an open structure. The RuvB hexamer acts as an ATP-dependent pump, pulling dsDNA into and through the RuvAB complex. HJ branch migration allows RuvC to scan DNA until it finds its consensus sequence, where it cleaves and resolves the cruciform DNA. The chain is Holliday junction branch migration complex subunit RuvA from Chloroherpeton thalassium (strain ATCC 35110 / GB-78).